The primary structure comprises 510 residues: Cytochrome P450 monooxygenase btcC (510 aa).

The helical transmembrane segment at 1–21 (MSFPGVIFVVSFFPLLMGIAV) threads the bilayer. Cysteine 446 contributes to the heme binding site.

It belongs to the cytochrome P450 family. Heme is required as a cofactor.

The protein localises to the membrane. It participates in secondary metabolite biosynthesis; terpenoid biosynthesis. In terms of biological role, cytochrome P450 monooxygenase; part of the gene cluster that mediates the biosynthesis of betaestacins. The bifunctional terpene synthase btcA converts isopentenyl diphosphate (IPP) and dimethylallyl diphosphate (DMAPP) into the sesterterpene betaestacin I. The C-terminal prenyltransferase (PT) domain of btcA catalyzes formation of GFPP, whereas the N-terminal terpene cyclase (TC) domain catalyzes the cyclization of GFPP into betaestacin I. The cytochrome P450 monooxygenase btcB is then responsible for the six-step oxidation of betaestacin I to yield betaestacin II. The roles of the cytochrome P450 monooxygenase btcC and the alpha-ketoglutarate-dependent dioxygenase btcD have not been identified yet. The protein is Cytochrome P450 monooxygenase btcC of Neocamarosporium betae (Beet black rot fungus).